A 293-amino-acid polypeptide reads, in one-letter code: Nucleotide-binding protein BBR47_52620 (293 aa).

An ATP-binding site is contributed by 17–24 (GMSGAGKT). 68-71 (DLRG) is a binding site for GTP.

Belongs to the RapZ-like family.

Functionally, displays ATPase and GTPase activities. This is Nucleotide-binding protein BBR47_52620 from Brevibacillus brevis (strain 47 / JCM 6285 / NBRC 100599).